The primary structure comprises 140 residues: Nucleoside diphosphate kinase (140 aa).

6 residues coordinate ATP: lysine 11, phenylalanine 59, arginine 87, threonine 93, arginine 104, and asparagine 114. Histidine 117 serves as the catalytic Pros-phosphohistidine intermediate.

Belongs to the NDK family. As to quaternary structure, homotetramer. Requires Mg(2+) as cofactor.

Its subcellular location is the cytoplasm. The enzyme catalyses a 2'-deoxyribonucleoside 5'-diphosphate + ATP = a 2'-deoxyribonucleoside 5'-triphosphate + ADP. It catalyses the reaction a ribonucleoside 5'-diphosphate + ATP = a ribonucleoside 5'-triphosphate + ADP. Its function is as follows. Major role in the synthesis of nucleoside triphosphates other than ATP. The ATP gamma phosphate is transferred to the NDP beta phosphate via a ping-pong mechanism, using a phosphorylated active-site intermediate. In Ruegeria sp. (strain TM1040) (Silicibacter sp.), this protein is Nucleoside diphosphate kinase.